A 147-amino-acid polypeptide reads, in one-letter code: MKVILLKDVKSLGKKGDLVNASDGYARNYLIPKKLAEQATENNVHILNNKKEAERRQKLKELEEAQKLAKSLMGKEIKFKVKIGENGRLFGSITSKDISEKLKEQYNMDIDKKKIVAETIRQTGVYEAEIKIYPEVSTKVKVSVLEE.

Belongs to the bacterial ribosomal protein bL9 family.

In terms of biological role, binds to the 23S rRNA. In Clostridium botulinum (strain 657 / Type Ba4), this protein is Large ribosomal subunit protein bL9.